Here is a 142-residue protein sequence, read N- to C-terminus: ATP synthase F(0) complex subunit C3, mitochondrial (142 aa).

A mitochondrion-targeting transit peptide spans 1 to 67 (MFACAKLACT…REFQTSAISR (67 aa)). The chain crosses the membrane as a helical span at residues 83–103 (VGVAGSGAGIGTVFGSLIIGY). Position 110 is an N6,N6,N6-trimethyllysine (lysine 110). Residues 118–138 (ILGFALSEAMGLFCLMVAFLI) form a helical membrane-spanning segment.

The protein belongs to the ATPase C chain family. As to quaternary structure, F-type ATPases have 2 components, CF(1) - the catalytic core - and CF(0) - the membrane proton channel. CF(1) has five subunits: alpha(3), beta(3), gamma(1), delta(1), epsilon(1). CF(0) has three main subunits: a, b and c. Interacts with TMEM70 and TMEM242. Post-translationally, trimethylated by ATPSCKMT at Lys-110. Methylation is required for proper incorporation of the C subunit into the ATP synthase complex and mitochondrial respiration.

The protein resides in the mitochondrion membrane. Mitochondrial membrane ATP synthase (F(1)F(0) ATP synthase or Complex V) produces ATP from ADP in the presence of a proton gradient across the membrane which is generated by electron transport complexes of the respiratory chain. F-type ATPases consist of two structural domains, F(1) - containing the extramembraneous catalytic core and F(0) - containing the membrane proton channel, linked together by a central stalk and a peripheral stalk. During catalysis, ATP synthesis in the catalytic domain of F(1) is coupled via a rotary mechanism of the central stalk subunits to proton translocation. Part of the complex F(0) domain. A homomeric c-ring of probably 10 subunits is part of the complex rotary element. This is ATP synthase F(0) complex subunit C3, mitochondrial from Pongo abelii (Sumatran orangutan).